Consider the following 110-residue polypeptide: Insulin (110 aa).

Positions 1–24 (MAPWTRLLPLLALLSLWIPAPTRA) are cleaved as a signal peptide. Disulfide bonds link Cys-31–Cys-96, Cys-43–Cys-109, and Cys-95–Cys-100. The propeptide at 57-87 (EAEDLQGKDAELGEAPGAGGLQPSALEAPLQ) is c peptide. The tract at residues 60-80 (DLQGKDAELGEAPGAGGLQPS) is disordered.

It belongs to the insulin family. Heterodimer of a B chain and an A chain linked by two disulfide bonds.

The protein localises to the secreted. Insulin decreases blood glucose concentration. It increases cell permeability to monosaccharides, amino acids and fatty acids. It accelerates glycolysis, the pentose phosphate cycle, and glycogen synthesis in liver. The chain is Insulin (INS) from Felis catus (Cat).